The chain runs to 145 residues: uncharacterized protein (145 aa).

2 consecutive transmembrane segments (helical) span residues 20–40 (LIGP…GMFF) and 116–136 (MIML…VLSA).

Its subcellular location is the membrane. This is an uncharacterized protein from Saccharomyces cerevisiae (strain ATCC 204508 / S288c) (Baker's yeast).